The primary structure comprises 695 residues: UvrABC system protein C (695 aa).

Positions 1-10 (MNHDPAETRD) are enriched in basic and acidic residues. Residues 1–44 (MNHDPAETRDTAAAPLADTESPSPVSPELTPHPAPAAQDIDTAT) are disordered. Residues 88–166 (TSPGVYRMLN…IKQLRPRFNV (79 aa)) enclose the GIY-YIG domain. Residues 276–311 (RAVKQELAVEMEKASNELEFETAALYRDRLAALSAI) enclose the UVR domain.

This sequence belongs to the UvrC family. In terms of assembly, interacts with UvrB in an incision complex.

It is found in the cytoplasm. In terms of biological role, the UvrABC repair system catalyzes the recognition and processing of DNA lesions. UvrC both incises the 5' and 3' sides of the lesion. The N-terminal half is responsible for the 3' incision and the C-terminal half is responsible for the 5' incision. In Rhodopseudomonas palustris (strain HaA2), this protein is UvrABC system protein C.